Here is a 352-residue protein sequence, read N- to C-terminus: MTATLERRESASLWGRFCDWVTSTENRLYIGWFGVIMIPTLLTATSVFIIAFIAAPPVDIDGIREPVAGSLLFGNNIISGAIVPTSAAIGLHFYPIWEAASVDEWLYNGGPYELIVLHFLLGVCCYMGREWELSFRLGMRPWIAVAYSAPVAAATAVFLIYPIGQGSFSDGMPLGISGTFNFMIVFQAEHNILMHPFHMLGVAGVFGGSLFSAMHGSLVTSSLIRETTENESANAGYKFGQEEETYNIVAAHGYFGRLIFQYASFNNSRSLHFFLAAWPVVGIWFTALGVSTMAFNLNGFNFNQSVVDSQGRVINTWADIINRANLGMEVMHERNAHNFPLDLASVEAPVVG.

An N-acetylthreonine modification is found at T2. Phosphothreonine is present on T2. The next 3 helical transmembrane spans lie at 29–46 (YIGW…TATS), 118–133 (HFLL…EWEL), and 142–156 (WIAV…AATA). H118 contributes to the chlorophyll a binding site. Y126 contacts pheophytin a. D170 and E189 together coordinate [CaMn4O5] cluster. A helical transmembrane segment spans residues 197 to 218 (FHMLGVAGVFGGSLFSAMHGSL). H198 is a chlorophyll a binding site. Residues H215 and 264-265 (SF) each bind a quinone. Residue H215 participates in Fe cation binding. H272 contacts Fe cation. Residues 274–288 (FLAAWPVVGIWFTAL) form a helical membrane-spanning segment. [CaMn4O5] cluster is bound by residues H332, E333, D342, and A344. A propeptide spanning residues 345–352 (SVEAPVVG) is cleaved from the precursor.

Belongs to the reaction center PufL/M/PsbA/D family. As to quaternary structure, PSII is composed of 1 copy each of membrane proteins PsbA, PsbB, PsbC, PsbD, PsbE, PsbF, PsbH, PsbI, PsbJ, PsbK, PsbL, PsbM, PsbT, PsbX, PsbY, PsbZ, Psb30/Ycf12, at least 3 peripheral proteins of the oxygen-evolving complex and a large number of cofactors. It forms dimeric complexes. It depends on The D1/D2 heterodimer binds P680, chlorophylls that are the primary electron donor of PSII, and subsequent electron acceptors. It shares a non-heme iron and each subunit binds pheophytin, quinone, additional chlorophylls, carotenoids and lipids. D1 provides most of the ligands for the Mn4-Ca-O5 cluster of the oxygen-evolving complex (OEC). There is also a Cl(-1) ion associated with D1 and D2, which is required for oxygen evolution. The PSII complex binds additional chlorophylls, carotenoids and specific lipids. as a cofactor. Tyr-161 forms a radical intermediate that is referred to as redox-active TyrZ, YZ or Y-Z. In terms of processing, C-terminally processed by CTPA; processing is essential to allow assembly of the oxygen-evolving complex and thus photosynthetic growth.

It localises to the plastid. The protein resides in the chloroplast thylakoid membrane. It carries out the reaction 2 a plastoquinone + 4 hnu + 2 H2O = 2 a plastoquinol + O2. Photosystem II (PSII) is a light-driven water:plastoquinone oxidoreductase that uses light energy to abstract electrons from H(2)O, generating O(2) and a proton gradient subsequently used for ATP formation. It consists of a core antenna complex that captures photons, and an electron transfer chain that converts photonic excitation into a charge separation. The D1/D2 (PsbA/PsbD) reaction center heterodimer binds P680, the primary electron donor of PSII as well as several subsequent electron acceptors. The protein is Photosystem II protein D1 of Zygnema circumcarinatum (Green alga).